Here is a 276-residue protein sequence, read N- to C-terminus: Large ribosomal subunit protein uL2c (276 aa).

Residues 225–276 (AMNPVDHPHGGGEGRTPIGRKKPVTPWGYSALGKKSRKRNRYSDASILRRRE) are disordered.

It belongs to the universal ribosomal protein uL2 family. Part of the 50S ribosomal subunit.

The protein localises to the plastid. The protein resides in the chloroplast. This Pinus thunbergii (Japanese black pine) protein is Large ribosomal subunit protein uL2c (rpl2).